We begin with the raw amino-acid sequence, 220 residues long: Cytidylate kinase (220 aa).

10–18 lines the ATP pocket; that stretch reads GPASSGKST.

This sequence belongs to the cytidylate kinase family. Type 1 subfamily.

It localises to the cytoplasm. The catalysed reaction is CMP + ATP = CDP + ADP. The enzyme catalyses dCMP + ATP = dCDP + ADP. The chain is Cytidylate kinase from Lactococcus lactis subsp. cremoris (strain SK11).